The chain runs to 373 residues: Dual-specificity RNA methyltransferase RlmN (373 aa).

The Proton acceptor role is filled by E94. Residues 100–339 form the Radical SAM core domain; the sequence is EEDRATLCVS…VIVRKTRGDD (240 aa). C107 and C344 are joined by a disulfide. Positions 114, 118, and 121 each coordinate [4Fe-4S] cluster. S-adenosyl-L-methionine-binding positions include 168–169, S200, 222–224, and N301; these read GE and SIH. C344 serves as the catalytic S-methylcysteine intermediate.

It belongs to the radical SAM superfamily. RlmN family. Requires [4Fe-4S] cluster as cofactor.

Its subcellular location is the cytoplasm. The enzyme catalyses adenosine(2503) in 23S rRNA + 2 reduced [2Fe-2S]-[ferredoxin] + 2 S-adenosyl-L-methionine = 2-methyladenosine(2503) in 23S rRNA + 5'-deoxyadenosine + L-methionine + 2 oxidized [2Fe-2S]-[ferredoxin] + S-adenosyl-L-homocysteine. It carries out the reaction adenosine(37) in tRNA + 2 reduced [2Fe-2S]-[ferredoxin] + 2 S-adenosyl-L-methionine = 2-methyladenosine(37) in tRNA + 5'-deoxyadenosine + L-methionine + 2 oxidized [2Fe-2S]-[ferredoxin] + S-adenosyl-L-homocysteine. In terms of biological role, specifically methylates position 2 of adenine 2503 in 23S rRNA and position 2 of adenine 37 in tRNAs. m2A2503 modification seems to play a crucial role in the proofreading step occurring at the peptidyl transferase center and thus would serve to optimize ribosomal fidelity. The chain is Dual-specificity RNA methyltransferase RlmN from Shewanella loihica (strain ATCC BAA-1088 / PV-4).